A 268-amino-acid chain; its full sequence is MTAQQPPRLLQGIPLAVRKLQKTFGSRQVLREIDLHIPAGQFVAVVGRSGCGKSTLLRLLAGLDQPSAGELLAGSAPLSAAIEDTRLMFQEARLLPWKKVIDNVGLGLKGNWRPQALQALEAVGLADRAQEWPAALSGGQKQRVALARALIHQPRLLLLDEPLGALDALTRIEMQQLIERLWQQHGFTVLLVTHDVSEAVAIADRVILIEDGEVGLDLHVELPRPRVRGSHRLAALETEVLNRVLSLPGSPPEPEPVSPLPTQLRWAL.

The ABC transporter domain occupies Leu15–Leu236. Gly47–Ser54 contacts ATP.

The protein belongs to the ABC transporter superfamily. Aliphatic sulfonates importer (TC 3.A.1.17.2) family. As to quaternary structure, the complex is composed of two ATP-binding proteins (SsuB), two transmembrane proteins (SsuC) and a solute-binding protein (SsuA).

The protein resides in the cell inner membrane. It carries out the reaction ATP + H2O + aliphatic sulfonate-[sulfonate-binding protein]Side 1 = ADP + phosphate + aliphatic sulfonateSide 2 + [sulfonate-binding protein]Side 1.. Its function is as follows. Part of the ABC transporter complex SsuABC involved in aliphatic sulfonates import. Responsible for energy coupling to the transport system. The chain is Aliphatic sulfonates import ATP-binding protein SsuB 2 from Pseudomonas fluorescens (strain ATCC BAA-477 / NRRL B-23932 / Pf-5).